The following is a 193-amino-acid chain: Peptide deformylase (193 aa).

2 residues coordinate Fe cation: cysteine 111 and histidine 155. The active site involves glutamate 156. Residue histidine 159 coordinates Fe cation.

The protein belongs to the polypeptide deformylase family. It depends on Fe(2+) as a cofactor.

It catalyses the reaction N-terminal N-formyl-L-methionyl-[peptide] + H2O = N-terminal L-methionyl-[peptide] + formate. Its function is as follows. Removes the formyl group from the N-terminal Met of newly synthesized proteins. Requires at least a dipeptide for an efficient rate of reaction. N-terminal L-methionine is a prerequisite for activity but the enzyme has broad specificity at other positions. In Mycoplasma genitalium (strain ATCC 33530 / DSM 19775 / NCTC 10195 / G37) (Mycoplasmoides genitalium), this protein is Peptide deformylase.